Reading from the N-terminus, the 287-residue chain is rRNA adenine N-6-methyltransferase (287 aa).

The segment covering 1–13 (MKKKNHKYRGKKL) has biased composition (basic residues). The disordered stretch occupies residues 1–21 (MKKKNHKYRGKKLNRGESPNF). 6 residues coordinate S-adenosyl-L-methionine: His25, Met27, Gly52, Glu73, Asp98, and Asn114.

Belongs to the class I-like SAM-binding methyltransferase superfamily. rRNA adenine N(6)-methyltransferase family. As to quaternary structure, homodimer.

Functionally, involved in erythromycin resistance. The protein is rRNA adenine N-6-methyltransferase (ermJ) of Bacillus anthracis.